A 292-amino-acid chain; its full sequence is Elongation factor Ts (292 aa).

The tract at residues 82-85 is involved in Mg(2+) ion dislocation from EF-Tu; the sequence is TDFV.

The protein belongs to the EF-Ts family.

The protein localises to the cytoplasm. Associates with the EF-Tu.GDP complex and induces the exchange of GDP to GTP. It remains bound to the aminoacyl-tRNA.EF-Tu.GTP complex up to the GTP hydrolysis stage on the ribosome. In Legionella pneumophila (strain Lens), this protein is Elongation factor Ts.